We begin with the raw amino-acid sequence, 330 residues long: Nodulation protein D 2 (330 aa).

The HTH lysR-type domain maps to 6–63 (LDLNLLVALDALITERNLSSAARKINLSQPAMSAAVARLRKHFRDELFGMRGRELVLS). The segment at residues 23–42 (LSSAARKINLSQPAMSAAVA) is a DNA-binding region (H-T-H motif). Residues 308-330 (RVTSSPEDAEPPGHFVRSVSPLP) are disordered.

This sequence belongs to the LysR transcriptional regulatory family.

Its function is as follows. NodD regulates the expression of the nodABCFE genes which encode other nodulation proteins. NodD is also a negative regulator of its own expression. Binds flavonoids as inducers. This Bradyrhizobium diazoefficiens (strain JCM 10833 / BCRC 13528 / IAM 13628 / NBRC 14792 / USDA 110) protein is Nodulation protein D 2 (nodD2).